The primary structure comprises 172 residues: Small ribosomal subunit protein uS5 (172 aa).

The 64-residue stretch at 11–74 (LSEVLVDVNR…QAAKKRMMKV (64 aa)) folds into the S5 DRBM domain.

Belongs to the universal ribosomal protein uS5 family. Part of the 30S ribosomal subunit. Contacts proteins S4 and S8.

With S4 and S12 plays an important role in translational accuracy. In terms of biological role, located at the back of the 30S subunit body where it stabilizes the conformation of the head with respect to the body. The protein is Small ribosomal subunit protein uS5 of Rickettsia canadensis (strain McKiel).